Reading from the N-terminus, the 262-residue chain is Origin recognition complex subunit 6 (262 aa).

Residues 197 to 217 (ALKRKKPEFSPTLKKKEPGLE) are disordered. A Glycyl lysine isopeptide (Lys-Gly) (interchain with G-Cter in SUMO2) cross-link involves residue Lys221. Residue Thr239 is modified to Phosphothreonine.

Belongs to the ORC6 family. Component of ORC, a complex composed of at least 6 subunits: ORC1, ORC2, ORC3, ORC4, ORC5 and ORC6. ORC is regulated in a cell-cycle dependent manner. It is sequentially assembled at the exit from anaphase of mitosis and disassembled as cells enter S phase. Interacts with DBF4.

Its subcellular location is the nucleus. Its function is as follows. Component of the origin recognition complex (ORC) that binds origins of replication. DNA-binding is ATP-dependent. The specific DNA sequences that define origins of replication have not been identified yet. ORC is required to assemble the pre-replication complex necessary to initiate DNA replication. The polypeptide is Origin recognition complex subunit 6 (Orc6) (Mus musculus (Mouse)).